A 340-amino-acid polypeptide reads, in one-letter code: Glycerol-3-phosphate dehydrogenase [NAD(P)+] (340 aa).

Residues Ser12, Trp13, and Lys110 each contribute to the NADPH site. Residues Lys110, Gly141, and Ser143 each contribute to the sn-glycerol 3-phosphate site. Ala145 is an NADPH binding site. Sn-glycerol 3-phosphate contacts are provided by Lys196, Asp249, Ser259, Arg260, and Asn261. Residue Lys196 is the Proton acceptor of the active site. Arg260 is a binding site for NADPH. Residues Val284 and Glu286 each contribute to the NADPH site.

This sequence belongs to the NAD-dependent glycerol-3-phosphate dehydrogenase family.

It is found in the cytoplasm. It catalyses the reaction sn-glycerol 3-phosphate + NAD(+) = dihydroxyacetone phosphate + NADH + H(+). The catalysed reaction is sn-glycerol 3-phosphate + NADP(+) = dihydroxyacetone phosphate + NADPH + H(+). It participates in membrane lipid metabolism; glycerophospholipid metabolism. In terms of biological role, catalyzes the reduction of the glycolytic intermediate dihydroxyacetone phosphate (DHAP) to sn-glycerol 3-phosphate (G3P), the key precursor for phospholipid synthesis. The protein is Glycerol-3-phosphate dehydrogenase [NAD(P)+] of Latilactobacillus sakei subsp. sakei (strain 23K) (Lactobacillus sakei subsp. sakei).